The following is a 240-amino-acid chain: uncharacterized protein (240 aa).

Disordered stretches follow at residues 125–148 (RRLDFSSEDGEEEEENDYIDEDVD) and 177–240 (DESN…RKSR). A compositionally biased stretch (acidic residues) spans 130–148 (SSEDGEEEEENDYIDEDVD). Residues 192-203 (SPRKSHIDHDFV) show a composition bias toward basic and acidic residues. Residues 204 to 217 (IPEDEMLSEEEEQE) are compositionally biased toward acidic residues. A Phosphoserine modification is found at Ser231.

Belongs to the UTP5 family.

The protein localises to the cytoplasm. It localises to the nucleus. This is an uncharacterized protein from Schizosaccharomyces pombe (strain 972 / ATCC 24843) (Fission yeast).